The sequence spans 38 residues: Photosystem II reaction center protein X (38 aa).

Residues 9 to 29 (IASLTAGALVLSAIGIALIII) form a helical membrane-spanning segment.

This sequence belongs to the PsbX family. Type 1 subfamily. In terms of assembly, PSII is composed of 1 copy each of membrane proteins PsbA, PsbB, PsbC, PsbD, PsbE, PsbF, PsbH, PsbI, PsbJ, PsbK, PsbL, PsbM, PsbT, PsbX, PsbY, PsbZ, Psb30/Ycf12, at least 3 peripheral proteins of the oxygen-evolving complex and a large number of cofactors. It forms dimeric complexes.

It localises to the plastid. The protein resides in the chloroplast thylakoid membrane. Involved in the binding and/or turnover of quinones at the Q(B) site of photosystem II (PSII). PSII is a light-driven water plastoquinone oxidoreductase, using light energy to abstract electrons from H(2)O, generating a proton gradient subsequently used for ATP formation. The sequence is that of Photosystem II reaction center protein X from Thalassiosira pseudonana (Marine diatom).